A 209-amino-acid chain; its full sequence is Large ribosomal subunit protein uL4 (209 aa).

A disordered region spans residues 50–78 (STLKKGEVSGGGKKPYQQKHTGRARQGSI).

This sequence belongs to the universal ribosomal protein uL4 family. In terms of assembly, part of the 50S ribosomal subunit.

Functionally, one of the primary rRNA binding proteins, this protein initially binds near the 5'-end of the 23S rRNA. It is important during the early stages of 50S assembly. It makes multiple contacts with different domains of the 23S rRNA in the assembled 50S subunit and ribosome. Its function is as follows. Forms part of the polypeptide exit tunnel. This Mycoplasmoides gallisepticum (strain R(low / passage 15 / clone 2)) (Mycoplasma gallisepticum) protein is Large ribosomal subunit protein uL4.